A 300-amino-acid chain; its full sequence is Protoheme IX farnesyltransferase (300 aa).

The next 9 membrane-spanning stretches (helical) occupy residues 20–40 (ITKMRLAISVVFSSVAGYFLG), 43–63 (TIDFVTVTLLAIGGYLMVGAS), 94–114 (PVAFTIASAFTVLGLVVLYVI), 116–136 (PKTAMFGAISIFLYVSIYTPL), 142–162 (LSVFVGAFPGAIPFMLGWVAA), 173–193 (LFMIQFFWQFPHFWAIGWWLF), 215–235 (IQIILYTCWTILVSLIPVFGV), 241–261 (LTPVSGIIIFLLGLGMLYYAI), and 276–296 (MFASVSYITLLQIVYVLDKFI).

Belongs to the UbiA prenyltransferase family. Protoheme IX farnesyltransferase subfamily.

It localises to the cell membrane. It carries out the reaction heme b + (2E,6E)-farnesyl diphosphate + H2O = Fe(II)-heme o + diphosphate. It participates in porphyrin-containing compound metabolism; heme O biosynthesis; heme O from protoheme: step 1/1. Its function is as follows. Converts heme B (protoheme IX) to heme O by substitution of the vinyl group on carbon 2 of heme B porphyrin ring with a hydroxyethyl farnesyl side group. In Christiangramia forsetii (strain DSM 17595 / CGMCC 1.15422 / KT0803) (Gramella forsetii), this protein is Protoheme IX farnesyltransferase.